We begin with the raw amino-acid sequence, 556 residues long: Formate--tetrahydrofolate ligase (556 aa).

65 to 72 (TPAGEGKT) lines the ATP pocket.

The protein belongs to the formate--tetrahydrofolate ligase family.

The enzyme catalyses (6S)-5,6,7,8-tetrahydrofolate + formate + ATP = (6R)-10-formyltetrahydrofolate + ADP + phosphate. It participates in one-carbon metabolism; tetrahydrofolate interconversion. The sequence is that of Formate--tetrahydrofolate ligase from Hyphomonas neptunium (strain ATCC 15444).